Reading from the N-terminus, the 191-residue chain is uncharacterized protein (191 aa).

The Fe2OG dioxygenase domain occupies 87–184 (EFDSALIFHY…RIAITFRQMG (98 aa)).

This is an uncharacterized protein from Acanthamoeba polyphaga mimivirus (APMV).